The sequence spans 682 residues: DNA-directed RNA polymerase subunit beta' (682 aa).

Zn(2+)-binding residues include Cys69, Cys71, Cys87, and Cys90. The Mg(2+) site is built by Asp489, Asp491, and Asp493.

This sequence belongs to the RNA polymerase beta' chain family. RpoC1 subfamily. In plastids the minimal PEP RNA polymerase catalytic core is composed of four subunits: alpha, beta, beta', and beta''. When a (nuclear-encoded) sigma factor is associated with the core the holoenzyme is formed, which can initiate transcription. It depends on Mg(2+) as a cofactor. The cofactor is Zn(2+).

Its subcellular location is the plastid. The protein resides in the chloroplast. It catalyses the reaction RNA(n) + a ribonucleoside 5'-triphosphate = RNA(n+1) + diphosphate. In terms of biological role, DNA-dependent RNA polymerase catalyzes the transcription of DNA into RNA using the four ribonucleoside triphosphates as substrates. The protein is DNA-directed RNA polymerase subunit beta' of Platanus occidentalis (Sycamore).